A 106-amino-acid polypeptide reads, in one-letter code: Large ribosomal subunit protein uL24 (106 aa).

It belongs to the universal ribosomal protein uL24 family. In terms of assembly, part of the 50S ribosomal subunit.

Its function is as follows. One of two assembly initiator proteins, it binds directly to the 5'-end of the 23S rRNA, where it nucleates assembly of the 50S subunit. One of the proteins that surrounds the polypeptide exit tunnel on the outside of the subunit. The protein is Large ribosomal subunit protein uL24 of Azobacteroides pseudotrichonymphae genomovar. CFP2.